The primary structure comprises 251 residues: Adapter protein MecA (251 aa).

It belongs to the MecA family. Homodimer.

Enables the recognition and targeting of unfolded and aggregated proteins to the ClpC protease or to other proteins involved in proteolysis. This Streptococcus agalactiae serotype III (strain NEM316) protein is Adapter protein MecA.